The primary structure comprises 922 residues: Isoleucine--tRNA ligase (922 aa).

The 'HIGH' region signature appears at 57–67 (PYANGDIHLGH). Glu-553 serves as a coordination point for L-isoleucyl-5'-AMP. Residues 594–598 (KMSKS) carry the 'KMSKS' region motif. Lys-597 lines the ATP pocket. Cys-892, Cys-895, Cys-912, and Cys-915 together coordinate Zn(2+).

The protein belongs to the class-I aminoacyl-tRNA synthetase family. IleS type 1 subfamily. Monomer. Zn(2+) is required as a cofactor.

The protein resides in the cytoplasm. The enzyme catalyses tRNA(Ile) + L-isoleucine + ATP = L-isoleucyl-tRNA(Ile) + AMP + diphosphate. In terms of biological role, catalyzes the attachment of isoleucine to tRNA(Ile). As IleRS can inadvertently accommodate and process structurally similar amino acids such as valine, to avoid such errors it has two additional distinct tRNA(Ile)-dependent editing activities. One activity is designated as 'pretransfer' editing and involves the hydrolysis of activated Val-AMP. The other activity is designated 'posttransfer' editing and involves deacylation of mischarged Val-tRNA(Ile). This Desulfitobacterium hafniense (strain Y51) protein is Isoleucine--tRNA ligase.